A 344-amino-acid chain; its full sequence is Phenylalanine--tRNA ligase alpha subunit (344 aa).

Mg(2+) is bound at residue Glu255.

This sequence belongs to the class-II aminoacyl-tRNA synthetase family. Phe-tRNA synthetase alpha subunit type 1 subfamily. As to quaternary structure, tetramer of two alpha and two beta subunits. Requires Mg(2+) as cofactor.

Its subcellular location is the cytoplasm. It catalyses the reaction tRNA(Phe) + L-phenylalanine + ATP = L-phenylalanyl-tRNA(Phe) + AMP + diphosphate + H(+). In Phocaeicola vulgatus (strain ATCC 8482 / DSM 1447 / JCM 5826 / CCUG 4940 / NBRC 14291 / NCTC 11154) (Bacteroides vulgatus), this protein is Phenylalanine--tRNA ligase alpha subunit.